A 90-amino-acid chain; its full sequence is Cell division topological specificity factor (90 aa).

Residues 1-21 are disordered; that stretch reads MAGFWSKLFSSEEKPSSAQTA. Over residues 10–21 the composition is skewed to basic and acidic residues; sequence SSEEKPSSAQTA.

It belongs to the MinE family.

In terms of biological role, prevents the cell division inhibition by proteins MinC and MinD at internal division sites while permitting inhibition at polar sites. This ensures cell division at the proper site by restricting the formation of a division septum at the midpoint of the long axis of the cell. This is Cell division topological specificity factor from Acinetobacter baumannii (strain AB307-0294).